The sequence spans 72 residues: Small ribosomal subunit protein bS18 (72 aa).

Belongs to the bacterial ribosomal protein bS18 family. In terms of assembly, part of the 30S ribosomal subunit. Forms a tight heterodimer with protein bS6.

Functionally, binds as a heterodimer with protein bS6 to the central domain of the 16S rRNA, where it helps stabilize the platform of the 30S subunit. This chain is Small ribosomal subunit protein bS18, found in Fusobacterium nucleatum subsp. nucleatum (strain ATCC 25586 / DSM 15643 / BCRC 10681 / CIP 101130 / JCM 8532 / KCTC 2640 / LMG 13131 / VPI 4355).